The sequence spans 433 residues: Phosphoglycerate kinase, chloroplastic (433 aa).

The transit peptide at Gly1–Ser28 directs the protein to the chloroplast. (2R)-3-phosphoglycerate-binding residues include Ala51, Asp52, Asn54, Arg68, Ser90, His91, Gly93, Arg94, Arg149, His181, and Arg182. Gly227 serves as a coordination point for ADP. Gly227 contributes to the CDP binding site. The AMP site is built by Lys229 and Lys233. Position 233 (Lys233) interacts with ATP. Residue Gly251 participates in ADP binding. Gly251 provides a ligand contact to CDP. 2 residues coordinate AMP: Gly252 and Gly324. ATP-binding residues include Gly252 and Gly324. CDP-binding residues include Gly349 and Phe354. Position 354 (Phe354) interacts with ADP. Glu355 lines the AMP pocket. ATP is bound by residues Glu355, Asp386, and Ser387. Asp386 contacts Mg(2+).

This sequence belongs to the phosphoglycerate kinase family. Monomer. Mg(2+) serves as cofactor.

It is found in the plastid. It localises to the chloroplast. It carries out the reaction (2R)-3-phosphoglycerate + ATP = (2R)-3-phospho-glyceroyl phosphate + ADP. Its pathway is carbohydrate biosynthesis; Calvin cycle. The polypeptide is Phosphoglycerate kinase, chloroplastic (Spinacia oleracea (Spinach)).